Consider the following 586-residue polypeptide: Serine/threonine-protein kinase TDA1 (586 aa).

The tract at residues 1 to 26 (MTTASSSASQLQQRLPEEKPWPQLSG) is disordered. Residues 39–351 (VTNHNSLGDG…AKNLKQHPFI (313 aa)) enclose the Protein kinase domain. Residues 45–53 (LGDGNFSVV) and K68 contribute to the ATP site. The Proton acceptor role is filled by D180. The tract at residues 503–524 (TTPESRSNFNTPKTLSRQGSST) is disordered. A Phosphothreonine modification is found at T504. Residues S509 and S518 each carry the phosphoserine modification. T538 carries the post-translational modification Phosphothreonine. S578 bears the Phosphoserine mark.

Belongs to the protein kinase superfamily. Ser/Thr protein kinase family. Interacts with RIM11.

Its subcellular location is the cytoplasm. The protein localises to the nucleus. The catalysed reaction is L-seryl-[protein] + ATP = O-phospho-L-seryl-[protein] + ADP + H(+). It catalyses the reaction L-threonyl-[protein] + ATP = O-phospho-L-threonyl-[protein] + ADP + H(+). Functionally, serine/threonine protein kinase shown to have protein phosphorylation activity in vitro. This is Serine/threonine-protein kinase TDA1 (TDA1) from Saccharomyces cerevisiae (strain ATCC 204508 / S288c) (Baker's yeast).